The primary structure comprises 178 residues: uncharacterized protein (178 aa).

Functionally, this protein is non-essential for virus function. This is an uncharacterized protein from Sulfolobus spindle-shape virus 1 (SSV1).